We begin with the raw amino-acid sequence, 341 residues long: MSLAHSLKSFNSFGLAQSCADLVEAHSKEAVQAMCLPLWQQQLPMLVLGGGSNLVFTEDFNGTVVRVLSKGIKVSEDAEAFYLEVEAGENWHELIQFTLEHGMFGLENMALIPGTVGAAPIQNIGAYGVELCDVCDWVEYLDLPSGEFVRISTAECQFAYRESIFKDKLRNLAVVTAVGLRLVKRWQPRLAYGPLQSFDPATVTAREIFERVCQVRSEKLPDPAVLGNAGSFFKNPIVSAACYLDLAQRFPTIVGYAQADATVKLAAGWLIEQAGLKGFVLGNAAVHDKQALVLVNRGGATGRDICRLALHVIAQVQDKFGVVLEAEPRIMGANGEGDLYV.

The FAD-binding PCMH-type domain occupies Leu15–Arg185. The active site involves Arg161. The Proton donor role is filled by Ser231. The active site involves Glu327.

It belongs to the MurB family. Requires FAD as cofactor.

Its subcellular location is the cytoplasm. The catalysed reaction is UDP-N-acetyl-alpha-D-muramate + NADP(+) = UDP-N-acetyl-3-O-(1-carboxyvinyl)-alpha-D-glucosamine + NADPH + H(+). It functions in the pathway cell wall biogenesis; peptidoglycan biosynthesis. In terms of biological role, cell wall formation. The protein is UDP-N-acetylenolpyruvoylglucosamine reductase of Shewanella baltica (strain OS195).